The sequence spans 784 residues: ATP-dependent zinc metalloprotease FTSH 9, chloroplastic/mitochondrial (784 aa).

3 stretches are compositionally biased toward low complexity: residues 1-12 (MSALQASLLLRP), 24-34 (PLPSSSASFPR), and 42-53 (PLPLRALASEGP). A chloroplast and mitochondrion-targeting transit peptide spans 1-47 (MSALQASLLLRPLPSPLPPRRRLPLPSSSASFPRAGHHRRLPLPLRA). Residues 1–71 (MSALQASLLL…DPPPPELPAA (71 aa)) form a disordered region. Residues 54-69 (QPAPSPAPDPPPPELP) show a composition bias toward pro residues. 2 helical membrane passes run 104–124 (WVLALAAAVVAAARRFFDWVV) and 267–287 (IFSTVLFTIAVGLMWVMGAAA). 368 to 375 (GSPGTGKT) contributes to the ATP binding site. H601 is a Zn(2+) binding site. The active site involves E602. Zn(2+) is bound by residues H605 and D679.

This sequence in the N-terminal section; belongs to the AAA ATPase family. The protein in the C-terminal section; belongs to the peptidase M41 family. The cofactor is Zn(2+).

It localises to the mitochondrion membrane. The protein resides in the plastid. Its subcellular location is the chloroplast thylakoid membrane. Functionally, probable ATP-dependent zinc metallopeptidase. The chain is ATP-dependent zinc metalloprotease FTSH 9, chloroplastic/mitochondrial (FTSH9) from Oryza sativa subsp. japonica (Rice).